The following is a 363-amino-acid chain: Aminomethyltransferase (363 aa).

It belongs to the GcvT family. The glycine cleavage system is composed of four proteins: P, T, L and H.

It carries out the reaction N(6)-[(R)-S(8)-aminomethyldihydrolipoyl]-L-lysyl-[protein] + (6S)-5,6,7,8-tetrahydrofolate = N(6)-[(R)-dihydrolipoyl]-L-lysyl-[protein] + (6R)-5,10-methylene-5,6,7,8-tetrahydrofolate + NH4(+). In terms of biological role, the glycine cleavage system catalyzes the degradation of glycine. The sequence is that of Aminomethyltransferase from Staphylococcus aureus (strain MRSA252).